Reading from the N-terminus, the 159-residue chain is 6,7-dimethyl-8-ribityllumazine synthase (159 aa).

Residues Phe22, 57-59 (AVE), and 81-83 (AVI) contribute to the 5-amino-6-(D-ribitylamino)uracil site. 86–87 (GT) lines the (2S)-2-hydroxy-3-oxobutyl phosphate pocket. His89 functions as the Proton donor in the catalytic mechanism. 5-amino-6-(D-ribitylamino)uracil is bound at residue Phe114. Arg128 contributes to the (2S)-2-hydroxy-3-oxobutyl phosphate binding site.

Belongs to the DMRL synthase family. Forms an icosahedral capsid composed of 60 subunits, arranged as a dodecamer of pentamers.

It carries out the reaction (2S)-2-hydroxy-3-oxobutyl phosphate + 5-amino-6-(D-ribitylamino)uracil = 6,7-dimethyl-8-(1-D-ribityl)lumazine + phosphate + 2 H2O + H(+). Its pathway is cofactor biosynthesis; riboflavin biosynthesis; riboflavin from 2-hydroxy-3-oxobutyl phosphate and 5-amino-6-(D-ribitylamino)uracil: step 1/2. Catalyzes the formation of 6,7-dimethyl-8-ribityllumazine by condensation of 5-amino-6-(D-ribitylamino)uracil with 3,4-dihydroxy-2-butanone 4-phosphate. This is the penultimate step in the biosynthesis of riboflavin. In Shewanella baltica (strain OS155 / ATCC BAA-1091), this protein is 6,7-dimethyl-8-ribityllumazine synthase.